Reading from the N-terminus, the 425-residue chain is Serine--tRNA ligase (425 aa).

Residue 233–235 coordinates L-serine; it reads TAE. 264 to 266 contributes to the ATP binding site; that stretch reads RRE. Glu-287 is a binding site for L-serine. 351–354 contacts ATP; sequence EISS. Residue Ser-385 coordinates L-serine.

It belongs to the class-II aminoacyl-tRNA synthetase family. Type-1 seryl-tRNA synthetase subfamily. Homodimer. The tRNA molecule binds across the dimer.

It is found in the cytoplasm. The catalysed reaction is tRNA(Ser) + L-serine + ATP = L-seryl-tRNA(Ser) + AMP + diphosphate + H(+). The enzyme catalyses tRNA(Sec) + L-serine + ATP = L-seryl-tRNA(Sec) + AMP + diphosphate + H(+). Its pathway is aminoacyl-tRNA biosynthesis; selenocysteinyl-tRNA(Sec) biosynthesis; L-seryl-tRNA(Sec) from L-serine and tRNA(Sec): step 1/1. In terms of biological role, catalyzes the attachment of serine to tRNA(Ser). Is also able to aminoacylate tRNA(Sec) with serine, to form the misacylated tRNA L-seryl-tRNA(Sec), which will be further converted into selenocysteinyl-tRNA(Sec). This chain is Serine--tRNA ligase, found in Prochlorococcus marinus (strain MIT 9215).